A 273-amino-acid polypeptide reads, in one-letter code: Thiazole synthase (273 aa).

Lys110 (schiff-base intermediate with DXP) is an active-site residue. 1-deoxy-D-xylulose 5-phosphate is bound by residues Gly171, 197-198, and 219-220; these read AG and NT. Residues 251–273 are disordered; it reads MAAQDSAQPSTPVLGTPFWHHAP.

This sequence belongs to the ThiG family. Homotetramer. Forms heterodimers with either ThiH or ThiS.

The protein resides in the cytoplasm. The enzyme catalyses [ThiS sulfur-carrier protein]-C-terminal-Gly-aminoethanethioate + 2-iminoacetate + 1-deoxy-D-xylulose 5-phosphate = [ThiS sulfur-carrier protein]-C-terminal Gly-Gly + 2-[(2R,5Z)-2-carboxy-4-methylthiazol-5(2H)-ylidene]ethyl phosphate + 2 H2O + H(+). The protein operates within cofactor biosynthesis; thiamine diphosphate biosynthesis. Its function is as follows. Catalyzes the rearrangement of 1-deoxy-D-xylulose 5-phosphate (DXP) to produce the thiazole phosphate moiety of thiamine. Sulfur is provided by the thiocarboxylate moiety of the carrier protein ThiS. In vitro, sulfur can be provided by H(2)S. The sequence is that of Thiazole synthase from Variovorax paradoxus (strain S110).